Consider the following 177-residue polypeptide: Gamma-crystallin M1-2 (177 aa).

Beta/gamma crystallin 'Greek key' domains are found at residues 2–40 (GKIIFYEDRNFQGRSYECSNDNPDLQPNFNACNSVRVEN) and 41–83 (GCWM…RLLS). Positions 84 to 90 (QNLGIGT) are connecting peptide. 2 Beta/gamma crystallin 'Greek key' domains span residues 91–131 (NKLR…NVLD) and 132–174 (GYWI…RRVI).

It belongs to the beta/gamma-crystallin family. In terms of assembly, monomer.

Crystallins are the dominant structural components of the vertebrate eye lens. This chain is Gamma-crystallin M1-2, found in Aquarana catesbeiana (American bullfrog).